We begin with the raw amino-acid sequence, 144 residues long: UPF0102 protein BMA2801 (144 aa).

Residues 1 to 28 (MCHAREASPGTGEPEAAPRDNFPRAAGS) form a disordered region.

Belongs to the UPF0102 family.

The protein is UPF0102 protein BMA2801 of Burkholderia mallei (strain ATCC 23344).